Here is an 88-residue protein sequence, read N- to C-terminus: LYR motif-containing protein 2 (88 aa).

The transit peptide at 1-19 (MAASRLPPATLTLKQFVRR) directs the protein to the mitochondrion.

It belongs to the complex I LYR family.

The protein resides in the mitochondrion. Involved in efficient integration of the N-module into mitochondrial respiratory chain complex I. The protein is LYR motif-containing protein 2 (LYRM2) of Pongo abelii (Sumatran orangutan).